The following is an 88-amino-acid chain: uncharacterized protein (88 aa).

A run of 2 helical transmembrane segments spans residues 8 to 28 (IFLS…SIFF) and 45 to 65 (ELLR…VINL).

It localises to the membrane. This is an uncharacterized protein from Saccharomyces cerevisiae (strain ATCC 204508 / S288c) (Baker's yeast).